A 116-amino-acid polypeptide reads, in one-letter code: Large ribosomal subunit protein bL17 (116 aa).

Belongs to the bacterial ribosomal protein bL17 family. In terms of assembly, part of the 50S ribosomal subunit. Contacts proteins L3 and L32.

Binds to the 23S rRNA. In Deinococcus radiodurans (strain ATCC 13939 / DSM 20539 / JCM 16871 / CCUG 27074 / LMG 4051 / NBRC 15346 / NCIMB 9279 / VKM B-1422 / R1), this protein is Large ribosomal subunit protein bL17.